The chain runs to 126 residues: Large ribosomal subunit protein eL32 (126 aa).

It belongs to the eukaryotic ribosomal protein eL32 family. In terms of assembly, part of the 50S ribosomal subunit.

This is Large ribosomal subunit protein eL32 (rpl32e) from Thermococcus kodakarensis (strain ATCC BAA-918 / JCM 12380 / KOD1) (Pyrococcus kodakaraensis (strain KOD1)).